We begin with the raw amino-acid sequence, 436 residues long: MALPTIAIVGRPNVGKSTLFNRIAGERISIVEDVEGVTRDRIYATGEWLNRKFSLIDTGGIDDVDAPFMEQIKHQAEIAMDEADVIVFVVSGKEGVTDADEYVSRILYKTNKPVILVVNKVDNPEMRNDIYDFYSLGLGDPYPVSSVHGIGTGDVLDAIIENLPAQEAEENPDIIKFSLIGRPNVGKSSLINAILGEERVIASPVAGTTRDAIDTHFTDPEGQEFTMIDTAGMRKSGKVYENTEKYSVMRAMRAIERSDVILMVINAEEGIREYDKRIAGFAHEAGKGMIIVVNKWDTLEKDNHTMKQWEDDIRDQFQYLSYAPIIFVSALTKQRLHKLPEMIKAISESQNTRIPSAVLNDVIMDAIAINPTPTDKGKRLKIFYATQVATKPPTFVVFVNEEELMHFSYMRFLENQIRKAFVFEGTPIHLIARKRK.

2 consecutive EngA-type G domains span residues 4-167 and 175-351; these read PTIA…PAQE and IKFS…ESQN. GTP is bound by residues 10–17, 57–61, 119–122, 181–188, 229–233, and 294–297; these read GRPNVGKS, DTGGI, NKVD, DTAGM, and NKWD. The KH-like domain occupies 352–436; sequence TRIPSAVLND…PIHLIARKRK (85 aa).

This sequence belongs to the TRAFAC class TrmE-Era-EngA-EngB-Septin-like GTPase superfamily. EngA (Der) GTPase family. Associates with the 50S ribosomal subunit.

Functionally, GTPase that plays an essential role in the late steps of ribosome biogenesis. In Streptococcus suis (strain 98HAH33), this protein is GTPase Der.